A 503-amino-acid chain; its full sequence is Mitochondrial antiviral-signaling protein (503 aa).

Topologically, residues 1-478 are cytoplasmic; that stretch reads MTFAEDKTYK…HCASSMPWAK (478 aa). Glycyl lysine isopeptide (Lys-Gly) (interchain with G-Cter in ubiquitin) cross-links involve residues K7 and K10. The CARD domain maps to 10–77; sequence KYIRDNHSKF…WVEVFIRALQ (68 aa). The interval 10 to 77 is required for interaction with NLRX1; the sequence is KYIRDNHSKF…WVEVFIRALQ (68 aa). C79 carries S-palmitoyl cysteine lipidation. Positions 119 to 202 are disordered; the sequence is GPSAFAPGHN…HQEQEPELGG (84 aa). The segment at 143-147 is interaction with TRAF2; it reads PVQDT. A compositionally biased stretch (polar residues) spans 145–166; the sequence is QDTQPPESPVENSEQLLQTNSG. S152, S157, S172, S186, and S220 each carry phosphoserine. Positions 153-158 are interaction with TRAF6 1; it reads PVENSE. Residues 178–189 are compositionally biased toward polar residues; the sequence is PSPNQQALSPQP. R234 bears the Asymmetric dimethylarginine mark. S251 and S256 each carry phosphoserine. A Glycyl lysine isopeptide (Lys-Gly) (interchain with G-Cter in ubiquitin) cross-link involves residue K302. Positions 337–503 are interaction with DHX33; the sequence is PSRVPASVAK…MLYRSRRLAQ (167 aa). The interval 346–398 is disordered; the sequence is KAPANTIPPERNSKQAKETPEGPATKVTTGGNQTGPNSSIRSLHSGPEMSKPG. Positions 356–365 are enriched in basic and acidic residues; it reads RNSKQAKETP. Residues 371 to 387 show a composition bias toward polar residues; the sequence is KVTTGGNQTGPNSSIRS. S384 is subject to Phosphoserine. Residues 415–418 carry the pLxIS motif motif; that stretch reads LAIS. S418 carries the post-translational modification Phosphoserine; by TBK1. Residues 431-436 form an interaction with TRAF6 2 region; sequence PEENEY. A disordered region spans residues 446–466; it reads SPSADLLGSPEPLATQQPQEE. The helical transmembrane segment at 479–496 threads the bilayer; the sequence is WLGATSALLAVFLAVMLY. The Mitochondrial intermembrane portion of the chain corresponds to 497 to 503; the sequence is RSRRLAQ.

Self-associates and polymerizes (via CARD domains) to form 400 nM long three-stranded helical filaments on mitochondria, filament nucleation requires interaction with RIGI whose CARD domains act as a template for filament assembly. Interacts with RIGI, IFIH1/MDA5, TRAF2, TRAF6 and C1QBP. May interact with FADD, RIPK1, IKBKE, CHUK and IKBKB. Interacts (when phosphorylated) with IRF3; following activation and phosphorylation on the pLxIS motif by TBK1, recruits IRF3. Interacts with NLRX1. Interaction with NLRX1 requires the CARD domain. Interacts with PSMA7. Interacts with TRAFD1. Interacts (via C-terminus) with PCBP2 in a complex containing MAVS/IPS1, PCBP2 and ITCH. Interacts with CYLD. Interacts with SRC. Interacts with DHX58/LGP2 and IKBKE. Interacts with STING1. Interacts with IFIT3 (via N-terminus). Interacts with TBK1 only in the presence of IFIT3. Interacts with TTLL12; the interaction prevents MAVS binding to TBK1 and IKBKE. Interacts with MUL1. Interacts with ANKRD17. Interacts with NDFIP1. Interacts with SMURF1; the interaction is mediated by NDFIP1 and leads to MAVS ubiquitination and degradation. Interacts (via C-terminus) with GPATCH3; the interaction is markedly increased upon viral infection. Directly interacts (via CARD domain) with ATG5 and ATG12, either as ATG5 and ATG12 monomers or as ATG12-ATG5 conjugates. Interacts with DHX33 (via the helicase C-terminal domain). Interacts with DDX3X (via C-terminus); this interaction may occur rapidly, but transiently after viral infection. The interaction with DDX3X potentiates MAVS-mediated IFNB induction. Conversely inhibition of this interaction prevents MAVS-mediated IFNB induction. Transiently interacts with TRAF3 early during viral infection. Interacts with CLPB. Interacts with TRAF3IP3. Interacts with TOMM70; the interaction is enhanced by virus infection. Interacts with ZNFX1. Interacts with DHX15. Interacts with N4BP3; this interaction promotes the polyubiquitination of MAVS. Interacts with TAX1BP1; this interaction induces MAVS polyubiquitination. Interacts with NLRP3; promoting NLRP3 recruitment to mitochondria and activation of the NLRP3 inflammasome. Interacts with ECSIT; this interaction bridges RIGI to the MAVS complex at the mitochondrion. Interacts with UBL7; this interaction promotes MAVS 'Lys-27'-linked ubiquitination leading to type I interferon production. Interacts (via transmembrane domain) with SMIM30/MAVI1 (via transmembrane domain); the interaction disrupts MAVS interaction with RIGI and inhibits MAVS aggregation, resulting in the repression of type I interferon signaling and innate immune responses. In terms of processing, following activation, phosphorylated by TBK1 at Ser-418 in the pLxIS motif. The phosphorylated pLxIS motif constitutes an IRF3-binding motif, leading to recruitment of the transcription factor IRF3 to induce type-I interferons and other cytokines. Ubiquitinated. Undergoes 'Lys-48'-linked polyubiquitination catalyzed by ITCH; ITCH-dependent polyubiquitination is mediated by the interaction with PCBP2 and leads to MAVS/IPS1 proteasomal degradation. Ubiquitinated by RNF125, leading to its degradation by the proteasome. Undergoes 'Lys-48'-linked ubiquitination catalyzed by SMURF1. Undergoes 'Lys-48'-linked ubiquitination catalyzed by MARCHF5 at Lys-7, leading to proteasomal degradation. Ubiquitinated via 'Lys-63'-linked ubiquitination at Lys-10 by TRIM31, promoting MAVS polymerization and formation of three-stranded helical filaments on mitochondria. Undergoes 'Lys-63'-linked ubiquitination leading to enhanced interaction between MAVS and TRAF2. Undergoes 'Lys-27'-linked ubiquitination by UBE2N and TRIM21 leading to enhanced interaction between MAVS and TBK1. Deubiquitinated by USP10 leading to attenuation of RIGI-mediated MAVS aggregation and production of type I interferon. Undergoes 'Lys-48'-linked polyubiquitination catalyzed by RNF115 leading to its degradation. Post-translationally, proteolytically cleaved by apoptotic caspases during apoptosis, leading to its inactivation. Cleavage by CASP3 during virus-induced apoptosis inactivates it, preventing cytokine overproduction. In terms of processing, palmitoylated by ZHDDC4. Palmitoylation promotes MAVS stabilization and activation by inhibiting 'Lys-48'- but facilitating 'Lys-63'-linked ubiquitination.

Its subcellular location is the mitochondrion outer membrane. It localises to the mitochondrion. The protein localises to the peroxisome. In terms of biological role, adapter required for innate immune defense against viruses. Acts downstream of DHX33, RIGI and IFIH1/MDA5, which detect intracellular dsRNA produced during viral replication, to coordinate pathways leading to the activation of NF-kappa-B, IRF3 and IRF7, and to the subsequent induction of antiviral cytokines such as IFN-beta and RANTES (CCL5). Peroxisomal and mitochondrial MAVS act sequentially to create an antiviral cellular state. Upon viral infection, peroxisomal MAVS induces the rapid interferon-independent expression of defense factors that provide short-term protection, whereas mitochondrial MAVS activates an interferon-dependent signaling pathway with delayed kinetics, which amplifies and stabilizes the antiviral response. May activate the same pathways following detection of extracellular dsRNA by TLR3. May protect cells from apoptosis. Involved in NLRP3 inflammasome activation by mediating NLRP3 recruitment to mitochondria. In Mus musculus (Mouse), this protein is Mitochondrial antiviral-signaling protein.